The following is a 394-amino-acid chain: GDNF family receptor alpha-like (394 aa).

The N-terminal stretch at 1–19 is a signal peptide; sequence MLVFIFLAVRLSSENESSS. Topologically, residues 20 to 350 are extracellular; that stretch reads QTNDCAYFMR…LTGFNSPFSG (331 aa). Residues N65, N101, and N115 are each glycosylated (N-linked (GlcNAc...) asparagine). 11 disulfides stabilise this stretch: C132-C190, C139-C145, C156-C168, C163-C211, C192-C199, C221-C292, C228-C234, C245-C276, C253-C259, C270-C317, and C294-C305. A required for interaction with GDF15 region spans residues 150 to 229; that stretch reads ALYLKACTAN…TCLSVIHTCR (80 aa). A helical transmembrane segment spans residues 351 to 371; the sequence is ELIYVVVCMVVTSGILSLVML. Residues 372–394 lie on the Cytoplasmic side of the membrane; it reads KLRIPSKKRDPAPIEIAGAVIIQ.

Belongs to the GDNFR family. Interacts (via the extracellular domain) with GDF15 and RET; receptor of GDF15, mediates cellular signaling through interaction with RET after GDF15-binding. Interaction with RET requires previous GDF15-binding. In terms of processing, cleaved and inactivated by MMP14, inhibiting the GDF15-GFRAL aversive response. As to expression, expressed in the brainstem, restricted to cells in the area postrema and the immediately adjacent region of the nucleus tractus solitarius. Detected at low levels in testis.

Its subcellular location is the cell membrane. Its function is as follows. Brainstem-restricted receptor for GDF15 hormone, which triggers an aversive response, characterized by nausea, vomiting, and/or loss of appetite in response to various stresses. The aversive response is both required to reduce continuing exposure to those stresses at the time of exposure and to promote avoidance behavior in the future. The GDF15-GFRAL aversive response is triggered by stresses, such as anticancer drugs (camptothecin or cisplatin), cancers or drugs such as metformin. Upon interaction with its ligand, GDF15, mediates the GDF15-induced autophosphorylation and activation of the RET tyrosine kinase receptor, leading to activation of MAPK- and AKT- signaling pathways. Ligand-binding activates GFRAL-expressing neurons localized in the area postrema and nucleus tractus solitarius of the brainstem. The GDF15-GFRAL signal induces expression of genes involved in metabolism, such as lipid metabolism in adipose tissues. This Rattus norvegicus (Rat) protein is GDNF family receptor alpha-like.